Consider the following 515-residue polypeptide: Cytochrome P450 monooxygenase mfmA (515 aa).

The helical transmembrane segment at 3-23 threads the bilayer; it reads KISIIPIVGVALSLAIILQLG. Heme is bound at residue Cys-453.

The protein belongs to the cytochrome P450 family. Requires heme as cofactor.

It is found in the membrane. The protein operates within secondary metabolite biosynthesis; terpenoid biosynthesis. Its function is as follows. Cytochrome P450 monooxygenase; part of the gene cluster that mediates the biosynthesis of the phthalide-terpenoid hybrid 11'-O-desmethylfendlerol. Within the pathway, mfma and mfmC act together to convert 3,5-dimethylorsellinic acid (DMOA) into the phthalide 5,7-dihydroxy-4-(hydroxymethyl)-6-methylphthalide. MfmA performs especially an hydroxylation at C-9. The biosynthesis of 11'-O-desmethylfendlerol begins with the NR-PKS mfmB that forms 3,5-dimethylorsellinic acid (DMOA), which is then transformed into the phthalide 5,7-dihydroxy-4-(hydroxymethyl)-6-methylphthalide by the cytochrome P450 monooxygenase mfmA and the hydrolase mfmC. Subsequently, the methyltransferase mfmE catalyzes 7-O-methylation to yield 5-hydroxy-4-(hydroxymethyl)-7-methoxy-6-methylphthalide, which undergoes C-3 hydroxylation by the cytochrome P450 monooxygenase mfmF. The resultant cyclopolic acid (2,5-dihydroxy-4-(hydroxymethyl)-7-methoxy-6-methylphthalide) is then farnesylated by the DMATS-type prenyltransferase mfmD to afford 5-O-farnesylcyclopolic acid. Finally, the Pyr4-family terpene cyclase mfmH cyclizes the farnesyl moiety of 5-O-farnesylcyclopolic acid into a drimane-like structure, thus completing the biosynthesis of 11'-O-desmethylfendlerol. The chain is Cytochrome P450 monooxygenase mfmA from Annulohypoxylon moriforme (Filamentous fungus).